Here is a 150-residue protein sequence, read N- to C-terminus: SsrA-binding protein (150 aa).

This sequence belongs to the SmpB family.

The protein resides in the cytoplasm. Required for rescue of stalled ribosomes mediated by trans-translation. Binds to transfer-messenger RNA (tmRNA), required for stable association of tmRNA with ribosomes. tmRNA and SmpB together mimic tRNA shape, replacing the anticodon stem-loop with SmpB. tmRNA is encoded by the ssrA gene; the 2 termini fold to resemble tRNA(Ala) and it encodes a 'tag peptide', a short internal open reading frame. During trans-translation Ala-aminoacylated tmRNA acts like a tRNA, entering the A-site of stalled ribosomes, displacing the stalled mRNA. The ribosome then switches to translate the ORF on the tmRNA; the nascent peptide is terminated with the 'tag peptide' encoded by the tmRNA and targeted for degradation. The ribosome is freed to recommence translation, which seems to be the essential function of trans-translation. The chain is SsrA-binding protein from Borreliella afzelii (strain PKo) (Borrelia afzelii).